The sequence spans 736 residues: Microtubule-associated protein mu-2 (736 aa).

This sequence belongs to the orthoreovirus mu-2 protein family. Interacts with protein mu-NS; in viral inclusions. Interacts with polymerase lambda-3; this interaction stimulates the ATPase activity of mu-2. It depends on a divalent metal cation as a cofactor.

The protein resides in the virion. It localises to the host cytoplasm. It is found in the host cytoskeleton. Minor inner capsid (core) component. Displays NTPase and RNA 5'-triphosphatase (RTPase) activities. ATP is the preferred substrate for hydrolysis. May function as a cofactor of polymerase lambda-3. Associates with microtubules and plays a role in the formation, structural organization and morphology of viral inclusions, where the assembly of cores and the replication of viral RNA occur. Together with mu-NS, recruits the other core proteins to these inclusions. In Mammalia (T3D), this protein is Microtubule-associated protein mu-2 (M1).